Reading from the N-terminus, the 246-residue chain is tRNA pseudouridine synthase A (246 aa).

Residue aspartate 52 is the Nucleophile of the active site. Tyrosine 111 provides a ligand contact to substrate.

This sequence belongs to the tRNA pseudouridine synthase TruA family. In terms of assembly, homodimer.

The enzyme catalyses uridine(38/39/40) in tRNA = pseudouridine(38/39/40) in tRNA. Formation of pseudouridine at positions 38, 39 and 40 in the anticodon stem and loop of transfer RNAs. In Borreliella burgdorferi (strain ATCC 35210 / DSM 4680 / CIP 102532 / B31) (Borrelia burgdorferi), this protein is tRNA pseudouridine synthase A.